The chain runs to 181 residues: Probable chemoreceptor glutamine deamidase CheD (181 aa).

Belongs to the CheD family.

It carries out the reaction L-glutaminyl-[protein] + H2O = L-glutamyl-[protein] + NH4(+). In terms of biological role, probably deamidates glutamine residues to glutamate on methyl-accepting chemotaxis receptors (MCPs), playing an important role in chemotaxis. The protein is Probable chemoreceptor glutamine deamidase CheD of Agrobacterium fabrum (strain C58 / ATCC 33970) (Agrobacterium tumefaciens (strain C58)).